Here is a 284-residue protein sequence, read N- to C-terminus: tRNA-cytidine(32) 2-sulfurtransferase (284 aa).

Over residues 1-11 the composition is skewed to polar residues; the sequence is MTFHQPVSETA. Residues 1–20 form a disordered region; that stretch reads MTFHQPVSETAQPDEASGHP. A PP-loop motif motif is present at residues 63–68; the sequence is SGGKDS. Residues cysteine 138, cysteine 141, and cysteine 229 each contribute to the [4Fe-4S] cluster site.

It belongs to the TtcA family. As to quaternary structure, homodimer. Mg(2+) serves as cofactor. It depends on [4Fe-4S] cluster as a cofactor.

The protein resides in the cytoplasm. The enzyme catalyses cytidine(32) in tRNA + S-sulfanyl-L-cysteinyl-[cysteine desulfurase] + AH2 + ATP = 2-thiocytidine(32) in tRNA + L-cysteinyl-[cysteine desulfurase] + A + AMP + diphosphate + H(+). Its pathway is tRNA modification. Its function is as follows. Catalyzes the ATP-dependent 2-thiolation of cytidine in position 32 of tRNA, to form 2-thiocytidine (s(2)C32). The sulfur atoms are provided by the cysteine/cysteine desulfurase (IscS) system. This is tRNA-cytidine(32) 2-sulfurtransferase from Chelativorans sp. (strain BNC1).